The primary structure comprises 95 residues: Small ribosomal subunit protein bS6 (95 aa).

Belongs to the bacterial ribosomal protein bS6 family.

Binds together with bS18 to 16S ribosomal RNA. The chain is Small ribosomal subunit protein bS6 from Corynebacterium glutamicum (strain ATCC 13032 / DSM 20300 / JCM 1318 / BCRC 11384 / CCUG 27702 / LMG 3730 / NBRC 12168 / NCIMB 10025 / NRRL B-2784 / 534).